A 208-amino-acid polypeptide reads, in one-letter code: Kinetochore protein Spc25 (208 aa).

A coiled-coil region spans residues 31 to 101 (SKIAAKHQLI…KKQRRDELMG (71 aa)).

This sequence belongs to the SPC25 family. Component of the Ndc80 complex, which is composed of Ndc80, Nuf2 and Spc25.

It is found in the nucleus. The protein localises to the chromosome. The protein resides in the centromere. Its subcellular location is the kinetochore. Its function is as follows. Acts as a component of the essential kinetochore-associated Ndc80 complex, which is required for chromosome segregation and spindle checkpoint activity during meiosis and mitosis. Required for kinetochore integrity and the organization of stable microtubule binding sites in the outer plate of the kinetochore. Participates in SAC signaling that responds specifically to disruptions in spindle microtubule dynamics. The NDC80 complex synergistically enhances the affinity of the SKA1 complex for microtubules and may allow the NDC80 complex to track depolymerizing microtubules. This is Kinetochore protein Spc25 from Drosophila mojavensis (Fruit fly).